The chain runs to 872 residues: MEVLKEKVEEEEAAEREEAAERAERGEKTKRPMEVRREETTMTQEMLRDLERKLSEIEVSVPEKLLAFTKDTIDTSKLPLSYQSNTLKEEHLLQVADNFSRQYSHLCPDRVPLFLHPLNECEVPKFVSTTIRPTLMPYPELYNWDTCAQFISDFLSMVPLPDPLKPPLYLYSSTTVLKYQKGNCFDFSTLLCSMLIGAGYDAYCVNGYGSQDLCHMDLTREVCPLTMKPKESVKEEEKAPPKKYAIKPPRDLTSRFEQEQEMKRQEAIKAEEENRRKQEEARLLEQENAKTDPLHGLRVHSWVLVLSGKREVPESFFIDPFTARSYSTQDDHFLGIESLWNHKNYWVNMQDCWNCCKDLVFDLGDPVRWEYLLLGTDKPFLSLTEEEDEGMNDDDDVENLGKEDEDKSFDMPPSWVEQIEISPEAFETRCPNGKKVIQYKRAKLEKWAPYLNNNGLVCRLTTYEDLECTKTLEMKEWYQNREDMLELKHINKITGLNVDYFKPGHPQALRVHSYKSMQPEMDRVMEFYETARVDGLIKREETPKTMTEHYQGRPDFLSYRHVNFGPRMKKLALNSAESNPRPMVKITERFFRNPAKPADEDVAERVFLIAEERIQLRYHCRSDHITANKREFLRRTEVDSKGNKIIMTPDMCISFEVEPMEHTKKLLYQYEAMMKLKNEEKLSRHQAWESELEVLEILKLREEEEEAHTLTISIYDTKRNEKCKEYREAMERVLHEEHLRQVEAQLDYLAPFLAQLPPGEKLTRWQAVRLKDECLNDFKQRLIDKANLIQARFEKETQELQKKQQWYQENQVTLTPEDEDLYLSYCSQAMFRIRILEQRLSRHKELAPLKYLALEEKLYKDPRLVELLKVFV.

Disordered regions lie at residues 1–40 (MEVL…REET), 231–281 (ESVK…QEEA), and 385–410 (EEED…KSFD). A coiled-coil region spans residues 1 to 64 (MEVLKEKVEE…SEIEVSVPEK (64 aa)). Composition is skewed to basic and acidic residues over residues 16–40 (REEA…REET), 231–240 (ESVKEEEKAP), and 248–281 (PPRD…QEEA). Residues 254–292 (SRFEQEQEMKRQEAIKAEEENRRKQEEARLLEQENAKTD) are a coiled coil. The span at 385–398 (EEEDEGMNDDDDVE) shows a compositional bias: acidic residues. Basic and acidic residues predominate over residues 399–409 (NLGKEDEDKSF). Coiled coils occupy residues 676–706 (LKNE…EEEE) and 780–805 (QRLI…KKQQ).

Belongs to the DRC7 family. Component of the nexin-dynein regulatory complex (N-DRC). Interacts with TCTE1/DRC5. Interacts with DRC3 and GAS8/DRC4.

The protein localises to the cell projection. It is found in the cilium. The protein resides in the flagellum. It localises to the cytoplasm. Its subcellular location is the cytoskeleton. The protein localises to the cilium axoneme. It is found in the flagellum axoneme. In terms of biological role, component of the nexin-dynein regulatory complex (N-DRC) a key regulator of ciliary/flagellar motility which maintains the alignment and integrity of the distal axoneme and regulates microtubule sliding in motile axonemes. Involved in the regulation of flagellar motility. Essential for male fertility, sperm head morphogenesis and sperm flagellum formation. The sequence is that of Dynein regulatory complex subunit 7 (DRC7) from Bos taurus (Bovine).